Here is a 108-residue protein sequence, read N- to C-terminus: Replication initiation control protein YabA (108 aa).

Residues H83, C85, C99, and C102 each contribute to the Zn(2+) site.

The protein belongs to the YabA family. As to quaternary structure, homotetramer. Interacts with both DnaA and DnaN, acting as a bridge between these two proteins. Requires Zn(2+) as cofactor.

The protein resides in the cytoplasm. The protein localises to the nucleoid. Involved in control of chromosome replication initiation. Inhibits the cooperative binding of DnaA to the oriC region, thus negatively regulating initiation of chromosome replication. Inhibits the ability of DnaA-ATP to form a helix on DNA; does not disassemble preformed DnaA-DNA helices. Decreases the residence time of DnaA on the chromosome at its binding sites (oriC, replication forks and promoter-binding sites). Tethers DnaA to the replication machinery via the DNA polymerase beta sliding clamp subunit (dnaN). Associates with oriC and other DnaA targets on the chromosome in a DnaA-dependent manner. This is Replication initiation control protein YabA from Lactococcus lactis subsp. cremoris (strain SK11).